The chain runs to 301 residues: Protein KTI12 homolog (301 aa).

Residue 8–15 coordinates ATP; the sequence is GQPCSGKS. The tract at residues 262–275 is calmodulin-binding; sequence LRRTFIKLAGQYSL.

Belongs to the KTI12 family. As to quaternary structure, interacts with the elongator complex. Binds to calmodulin in a calcium-dependent manner.

It is found in the cytoplasm. The protein resides in the nucleus. In terms of biological role, elongator complex-associated factor that is not a structural subunit but rather transiently contacts the complex. Regulates both meristem activity and organ growth; acts as a positive regulator of adaxial leaf patterning. Required for an early step in synthesis of 5-carbamoylmethyl (ncm5) groups present on uridines (ncm5U) at the wobble position in tRNA. The protein is Protein KTI12 homolog of Oryza sativa subsp. indica (Rice).